A 553-amino-acid chain; its full sequence is Formate--tetrahydrofolate ligase (553 aa).

Residue 63–70 participates in ATP binding; sequence TPAGEGKS.

The protein belongs to the formate--tetrahydrofolate ligase family.

The enzyme catalyses (6S)-5,6,7,8-tetrahydrofolate + formate + ATP = (6R)-10-formyltetrahydrofolate + ADP + phosphate. Its pathway is one-carbon metabolism; tetrahydrofolate interconversion. The chain is Formate--tetrahydrofolate ligase from Limosilactobacillus fermentum (strain NBRC 3956 / LMG 18251) (Lactobacillus fermentum).